We begin with the raw amino-acid sequence, 272 residues long: Putative bark agglutinin LECRPA3 (272 aa).

The signal sequence occupies residues 1-29 (PFNPETVYALLAMLISFFVLLASARKENS). 3 N-linked (GlcNAc...) asparagine glycosylation sites follow: asparagine 36, asparagine 39, and asparagine 65. Mn(2+) contacts are provided by glutamate 150 and aspartate 152. 4 residues coordinate Ca(2+): aspartate 152, tyrosine 154, asparagine 156, and aspartate 159. Aspartate 159 and histidine 164 together coordinate Mn(2+).

Belongs to the leguminous lectin family. Homotetramer. In terms of tissue distribution, weak expression in bark. The lectin accumulates in the inner bark in autumn.

In terms of biological role, bark lectins are storage proteins that probably maintain stocks of nitrogen during dormant period. Self-aggregatable molecules that can bind their own carbohydrate side chains. They could also play a role in the plant's defense against phytophagous invertebrates or herbivorous higher animals. The sequence is that of Putative bark agglutinin LECRPA3 from Robinia pseudoacacia (Black locust).